A 59-amino-acid chain; its full sequence is Potassium channel toxin alpha-KTx 15.4 (59 aa).

The first 22 residues, 1 to 22, serve as a signal peptide directing secretion; sequence MKFSSIILLTLLICSMSIFGNC. Gln-23 carries the post-translational modification Pyrrolidone carboxylic acid. Cystine bridges form between Cys-30–Cys-50, Cys-35–Cys-55, and Cys-39–Cys-57.

As to expression, expressed by the venom gland.

Its subcellular location is the secreted. Its function is as follows. Blocker of A-type voltage-gated potassium channels of cerebellar granular cells. May also inhibit Kv4/KCND when coexpressed with DPP6 or DPP10. The occlusion of the outer entry of the K(+) conducting pore is partially reversible and affects both open and closed channels. It shares the same target in rat brain than BmTX3 (AC Q8I0L5) and AmmTX3 (AC P60208). This is Potassium channel toxin alpha-KTx 15.4 from Androctonus australis (Sahara scorpion).